Here is a 412-residue protein sequence, read N- to C-terminus: Imidazolonepropionase (412 aa).

Residues histidine 76 and histidine 78 each contribute to the Fe(3+) site. The Zn(2+) site is built by histidine 76 and histidine 78. Positions 85, 148, and 181 each coordinate 4-imidazolone-5-propanoate. Residue tyrosine 148 coordinates N-formimidoyl-L-glutamate. Position 242 (histidine 242) interacts with Fe(3+). Histidine 242 contacts Zn(2+). Glutamate 245 contacts 4-imidazolone-5-propanoate. Aspartate 317 serves as a coordination point for Fe(3+). Aspartate 317 contributes to the Zn(2+) binding site. Residues asparagine 319 and glycine 321 each coordinate N-formimidoyl-L-glutamate. Serine 322 contributes to the 4-imidazolone-5-propanoate binding site.

Belongs to the metallo-dependent hydrolases superfamily. HutI family. Requires Zn(2+) as cofactor. The cofactor is Fe(3+).

The protein localises to the cytoplasm. It carries out the reaction 4-imidazolone-5-propanoate + H2O = N-formimidoyl-L-glutamate. Its pathway is amino-acid degradation; L-histidine degradation into L-glutamate; N-formimidoyl-L-glutamate from L-histidine: step 3/3. Its function is as follows. Catalyzes the hydrolytic cleavage of the carbon-nitrogen bond in imidazolone-5-propanoate to yield N-formimidoyl-L-glutamate. It is the third step in the universal histidine degradation pathway. The protein is Imidazolonepropionase of Staphylococcus aureus (strain USA300 / TCH1516).